The primary structure comprises 356 residues: Phosphoribosyl pyrophosphate synthase-associated protein 1 (356 aa).

Met-1 carries the N-acetylmethionine modification. 2 positions are modified to phosphoserine: Ser-177 and Ser-215.

It belongs to the ribose-phosphate pyrophosphokinase family. In terms of assembly, binds to PRPS1 and PRPS2.

In terms of biological role, seems to play a negative regulatory role in 5-phosphoribose 1-diphosphate synthesis. This Bos taurus (Bovine) protein is Phosphoribosyl pyrophosphate synthase-associated protein 1 (PRPSAP1).